A 417-amino-acid chain; its full sequence is Phosphoglycerate kinase (417 aa).

(2R)-3-phosphoglycerate is bound by residues valine 23, aspartate 24, phenylalanine 25, asparagine 26, glutamine 38, arginine 39, serine 62, histidine 63, glycine 65, arginine 66, leucine 121, arginine 122, histidine 169, and arginine 170. Residue glycine 213 coordinates ADP. Residue glycine 213 coordinates CDP. Positions 214 and 215 each coordinate AMP. Residue alanine 214 coordinates ATP. A Mg(2+)-binding site is contributed by alanine 214. Aspartate 218 contributes to the CDP binding site. Position 218 (aspartate 218) interacts with Mg(2+). Lysine 219 serves as a coordination point for AMP. Lysine 219 is a binding site for ATP. Glycine 237 contacts ADP. Residue glycine 237 participates in CDP binding. Positions 238 and 312 each coordinate AMP. The ATP site is built by glycine 238 and glycine 312. 2 residues coordinate CDP: glycine 337 and phenylalanine 342. Phenylalanine 342 contacts ADP. Residue glutamate 343 participates in AMP binding. ATP-binding residues include glutamate 343, aspartate 374, and threonine 375. Position 374 (aspartate 374) interacts with Mg(2+).

Belongs to the phosphoglycerate kinase family. In terms of assembly, monomer. It depends on Mg(2+) as a cofactor.

The protein localises to the cytoplasm. Its subcellular location is the secreted. It localises to the cell wall. The protein resides in the mitochondrion. It carries out the reaction (2R)-3-phosphoglycerate + ATP = (2R)-3-phospho-glyceroyl phosphate + ADP. The protein operates within carbohydrate degradation; glycolysis; pyruvate from D-glyceraldehyde 3-phosphate: step 2/5. In terms of biological role, catalyzes one of the two ATP producing reactions in the glycolytic pathway via the reversible conversion of 1,3-diphosphoglycerate to 3-phosphoglycerate. Both L- and D- forms of purine and pyrimidine nucleotides can be used as substrates, but the activity is much lower on pyrimidines. Negatively regulates the biosynthesis of acetyl-CoA from pyruvate in the mitochondrion. This is Phosphoglycerate kinase (PGK1) from Candida albicans (strain SC5314 / ATCC MYA-2876) (Yeast).